The following is a 274-amino-acid chain: Putative bidirectional sugar transporter SWEET7d (274 aa).

Residues 1 to 8 are Extracellular-facing; the sequence is MVPDLIRN. Residues 9 to 29 traverse the membrane as a helical segment; the sequence is VVGIVGNVISFGLFLSPVPTF. One can recognise a MtN3/slv 1 domain in the interval 9–96; sequence VVGIVGNVIS…TIFFLFSDKK (88 aa). At 30–45 the chain is on the cytoplasmic side; that stretch reads WRIIKNKDVRDFKADQ. Residues 46 to 66 traverse the membrane as a helical segment; the sequence is YLATLLNCMLWVFYGLPIVHP. Residues 67 to 68 lie on the Extracellular side of the membrane; sequence NS. Residues 69–89 traverse the membrane as a helical segment; sequence ILVVTINGIGLVIEAVYLTIF. Residues 90 to 100 lie on the Cytoplasmic side of the membrane; sequence FLFSDKKNKKK. The helical transmembrane segment at 101 to 121 threads the bilayer; that stretch reads MGVVLATEALFMAAVALGVLL. The Extracellular portion of the chain corresponds to 122–130; it reads DAHTHQRRS. Residues 131–151 form a helical membrane-spanning segment; it reads LIVGILCVIFGTIMYSSPLTI. Residues 132 to 214 enclose the MtN3/slv 2 domain; that stretch reads IVGILCVIFG…QLILYAIYYR (83 aa). Residues 152-164 are Cytoplasmic-facing; the sequence is MSQVVKTKSVEYM. A helical membrane pass occupies residues 165 to 185; sequence PLLLSVVSFLNGLCWTSYALI. The Extracellular segment spans residues 186–188; the sequence is RFD. The chain crosses the membrane as a helical span at residues 189 to 209; the sequence is IFITIPNGLGVLFALMQLILY. The Cytoplasmic portion of the chain corresponds to 210-274; that stretch reads AIYYRTTPKK…SISRLSHKLA (65 aa). Residues 218 to 274 form a disordered region; sequence KKPSTTGPHPRSRIRTSSYQPSPPSPRAPASSPLSARTTTSMAAMSPSISRLSHKLA. Low complexity predominate over residues 245–258; it reads APASSPLSARTTTS.

Belongs to the SWEET sugar transporter family. As to quaternary structure, forms homooligomers and/or heterooligomers.

Its subcellular location is the cell membrane. Functionally, mediates both low-affinity uptake and efflux of sugar across the plasma membrane. This Oryza sativa subsp. japonica (Rice) protein is Putative bidirectional sugar transporter SWEET7d (SWEET7D).